Consider the following 177-residue polypeptide: Respiratory growth induced protein 1 (177 aa).

A disordered region spans residues 1-37; it reads MGRRKSQAAAERNLEPIKISTDSIKKRPRRDSNEPPF.

Belongs to the RGI1 family.

The protein localises to the cell membrane. Its function is as follows. Involved in the control of energetic metabolism and significantly contribute to cell fitness, especially under respiratory growth conditions. The polypeptide is Respiratory growth induced protein 1 (RGI1) (Komagataella phaffii (strain GS115 / ATCC 20864) (Yeast)).